The chain runs to 113 residues: UPF0342 protein SpyM3_0545 (113 aa).

The protein belongs to the UPF0342 family.

The chain is UPF0342 protein SpyM3_0545 from Streptococcus pyogenes serotype M3 (strain ATCC BAA-595 / MGAS315).